We begin with the raw amino-acid sequence, 59 residues long: Small integral membrane protein 30 (59 aa).

Positions 1-24 are cleaved as a signal peptide; sequence MTSVSTQLSLVLMSLLLVLPVVEA. Residues 25 to 29 are Extracellular-facing; the sequence is VEAGD. The chain crosses the membrane as a helical span at residues 30-50; sequence AIALLLGVVLSITGICACLGV. Topologically, residues 51–59 are cytoplasmic; the sequence is YARKRNGQM.

As to quaternary structure, interacts (via transmembrane domain) with antiviral protein MAVS (via transmembrane domain); the interaction disrupts MAVS interaction with RIGI and inhibits MAVS aggregation, resulting in the repression of type I interferon signaling and innate immune responses.

The protein localises to the endoplasmic reticulum membrane. It localises to the mitochondrion membrane. In terms of biological role, negatively regulates antiviral innate immune responses. Disrupts the interaction of antiviral protein MAVS with innate immune receptor RIGI and inhibits MAVS aggregation, resulting in the repression of type I interferon signaling and innate immune responses. The polypeptide is Small integral membrane protein 30 (Homo sapiens (Human)).